The primary structure comprises 138 residues: Acidic phospholipase A2 VP7 (138 aa).

An N-terminal signal peptide occupies residues 1–16; the sequence is MRTLWIVAVCLMGVEG. 7 disulfide bridges follow: Cys42/Cys131, Cys44/Cys60, Cys59/Cys111, Cys65/Cys138, Cys66/Cys104, Cys73/Cys97, and Cys91/Cys102. Ca(2+)-binding residues include Tyr43, Gly45, and Gly47. The active site involves His63. Asp64 serves as a coordination point for Ca(2+). Asp105 is a catalytic residue.

The protein belongs to the phospholipase A2 family. Group II subfamily. D49 sub-subfamily. Does not form a complex. It depends on Ca(2+) as a cofactor. Expressed by the venom gland.

The protein resides in the secreted. The enzyme catalyses a 1,2-diacyl-sn-glycero-3-phosphocholine + H2O = a 1-acyl-sn-glycero-3-phosphocholine + a fatty acid + H(+). Its function is as follows. Snake venom phospholipase A2 (PLA2) that is not toxic by itself, but the synergistical mixture of a basic and this acidic protein is lethal. PLA2 catalyzes the calcium-dependent hydrolysis of the 2-acyl groups in 3-sn-phosphoglycerides. This Daboia palaestinae (Palestine viper) protein is Acidic phospholipase A2 VP7.